A 307-amino-acid chain; its full sequence is Upstream stimulatory factor 1 (307 aa).

Disordered stretches follow at residues 104-131 (DDNG…SVGG) and 168-207 (QGGS…VERR). Over residues 122-131 (PTDSSTSVGG) the composition is skewed to low complexity. Residues 187-207 (DGPRTTRDDKRRAQHNEVERR) show a composition bias toward basic and acidic residues. The bHLH domain maps to 196–251 (KRRAQHNEVERRRRDKINNWIVQLSKIIPDCSMESTKTGQSKGGILSKACDYIQEL). Residues 268 to 289 (LQMDNEVLRQQVEDLKNNNLTL) are leucine-zipper.

In terms of assembly, efficient DNA binding requires dimerization with another bHLH protein. Binds DNA as a homodimer or a heterodimer. Oocyte and somatic tissue. Oocytic and somatic forms of this protein exist, probably as a result of post-translational modifications or minor splicing differences.

It localises to the nucleus. May act as a regulator of transcription factor IIIA (TFIIIA) gene expression. The protein is Upstream stimulatory factor 1 (usf1) of Xenopus borealis (Kenyan clawed frog).